A 584-amino-acid polypeptide reads, in one-letter code: 2-isopropylmalate synthase (584 aa).

A Pyruvate carboxyltransferase domain is found at 40–314 (PRWCAVDLRD…DPQIDFSDIE (275 aa)). Asp-49, His-253, His-255, and Asn-289 together coordinate Mg(2+). A regulatory domain region spans residues 456–584 (SRDGSGSTWG…VRDAQEAAQD (129 aa)).

The protein belongs to the alpha-IPM synthase/homocitrate synthase family. LeuA type 2 subfamily. As to quaternary structure, homodimer. The cofactor is Mg(2+).

The protein resides in the cytoplasm. The catalysed reaction is 3-methyl-2-oxobutanoate + acetyl-CoA + H2O = (2S)-2-isopropylmalate + CoA + H(+). It functions in the pathway amino-acid biosynthesis; L-leucine biosynthesis; L-leucine from 3-methyl-2-oxobutanoate: step 1/4. Its function is as follows. Catalyzes the condensation of the acetyl group of acetyl-CoA with 3-methyl-2-oxobutanoate (2-ketoisovalerate) to form 3-carboxy-3-hydroxy-4-methylpentanoate (2-isopropylmalate). This is 2-isopropylmalate synthase from Kocuria rhizophila (strain ATCC 9341 / DSM 348 / NBRC 103217 / DC2201).